The sequence spans 247 residues: ATP synthase subunit a, chloroplastic (247 aa).

Transmembrane regions (helical) follow at residues 38–58, 95–115, 134–154, 199–219, and 220–240; these read QVLI…ILVV, VPFI…GALL, INTT…AGIS, LVVV…VMFL, and GLFT…AYIG.

It belongs to the ATPase A chain family. In terms of assembly, F-type ATPases have 2 components, CF(1) - the catalytic core - and CF(0) - the membrane proton channel. CF(1) has five subunits: alpha(3), beta(3), gamma(1), delta(1), epsilon(1). CF(0) has four main subunits: a, b, b' and c.

Its subcellular location is the plastid. It localises to the chloroplast thylakoid membrane. Its function is as follows. Key component of the proton channel; it plays a direct role in the translocation of protons across the membrane. In Lotus japonicus (Lotus corniculatus var. japonicus), this protein is ATP synthase subunit a, chloroplastic.